A 43-amino-acid polypeptide reads, in one-letter code: Alpha-conotoxin-like Leo-A1 (43 aa).

Positions 1–26 are excised as a propeptide; the sequence is LTLDRASDDTDVAAEIMSGLIALAID. 2 disulfide bridges follow: Cys28/Cys34 and Cys29/Cys42. The interval 30–32 is lacks the Ser-Xaa-Pro motif that is crucial for potent interaction with nAChR; it reads SDS.

It belongs to the conotoxin A superfamily. In terms of tissue distribution, expressed by the venom duct.

Its subcellular location is the secreted. Alpha-conotoxins act on postsynaptic membranes, they bind to the nicotinic acetylcholine receptors (nAChR) and thus inhibit them. Has possibly a distinct nAChR binding mode from other alpha-conotoxins, due to a different three residue motif (lacks the Ser-Xaa-Pro motif). In Conus leopardus (Leopard cone), this protein is Alpha-conotoxin-like Leo-A1.